Here is a 156-residue protein sequence, read N- to C-terminus: Cellulose synthase operon protein D (156 aa).

The protein operates within glycan metabolism; bacterial cellulose biosynthesis. May have a major role in the perfection of crystallization, involved either in the pore structure itself or in the organization of the pores within the linear array of terminal synthesizing complexes (TCs). In Komagataeibacter sucrofermentans (strain ATCC 700178 / DSM 15973 / CECT 7291 / JCM 9730 / LMG 18788 / BPR 2001) (Acetobacter xylinus subsp. sucrofermentans), this protein is Cellulose synthase operon protein D.